The chain runs to 481 residues: Glutamate--tRNA ligase (481 aa).

The short motif at 11–21 is the 'HIGH' region element; that stretch reads PSPTGLLHIGN. Positions 255–259 match the 'KMSKS' region motif; the sequence is KLSKR. Position 258 (Lys258) interacts with ATP.

This sequence belongs to the class-I aminoacyl-tRNA synthetase family. Glutamate--tRNA ligase type 1 subfamily. In terms of assembly, monomer.

The protein localises to the cytoplasm. It catalyses the reaction tRNA(Glu) + L-glutamate + ATP = L-glutamyl-tRNA(Glu) + AMP + diphosphate. Catalyzes the attachment of glutamate to tRNA(Glu) in a two-step reaction: glutamate is first activated by ATP to form Glu-AMP and then transferred to the acceptor end of tRNA(Glu). The chain is Glutamate--tRNA ligase from Streptococcus pyogenes serotype M6 (strain ATCC BAA-946 / MGAS10394).